Reading from the N-terminus, the 80-residue chain is Large ribosomal subunit protein bL31B (80 aa).

It belongs to the bacterial ribosomal protein bL31 family. Type B subfamily. In terms of assembly, part of the 50S ribosomal subunit.

This Xanthomonas campestris pv. campestris (strain 8004) protein is Large ribosomal subunit protein bL31B.